We begin with the raw amino-acid sequence, 469 residues long: Gamma-aminobutyric acid permease (469 aa).

The Cytoplasmic portion of the chain corresponds to 1 to 17 (MNQSQSGLKKELKTRHM). A helical membrane pass occupies residues 18–38 (TMISIAGVIGAGLFVGSGSVI). Position 39 (His-39) is a topological domain, extracellular. A helical membrane pass occupies residues 40 to 60 (STGPGAVVSYALAGLLVIFIM). Residues 61-94 (RMLGEMSAVNPTSGSFSQYAHDAIGPWAGFTIGW) are Cytoplasmic-facing. A helical membrane pass occupies residues 95 to 115 (LYWFFWVIVIAIEAIAGAGII). Gln-116 is a topological domain (extracellular). A helical membrane pass occupies residues 117–137 (YWFHDIPLWLTSLILTIVLTL). Topologically, residues 138–157 (TNVYSVKSFGEFEYWFSLIK) are cytoplasmic. The helical transmembrane segment at 158–178 (VVTIIAFLIVGFAFIFGFAPG) threads the bilayer. The Extracellular segment spans residues 179 to 200 (SEPVGFSNLTGKGGFFPEGISS). A helical transmembrane segment spans residues 201-221 (VLLGIVVVIFSFMGTEIVAIA). Over 222–242 (AGETSNPIESVTKATRSVVWR) the chain is Cytoplasmic. A helical membrane pass occupies residues 243 to 263 (IIVFYVGSIAIVVALLPWNSA). Topologically, residues 264-269 (NILESP) are extracellular. The chain crosses the membrane as a helical span at residues 270 to 290 (FVAVLEHIGVPAAAQIMNFIV). Topologically, residues 291–328 (LTAVLSCLNSGLYTTSRMLYSLAERNEAPRRFMKLSKK) are cytoplasmic. A helical transmembrane segment spans residues 329 to 349 (GVPVQAIVAGTFFSYIAVVMN). Over 350–355 (YFSPDT) the chain is Extracellular. A helical membrane pass occupies residues 356-376 (VFLFLVNSSGAIALLVYLVIA). At 377-401 (VSQLKMRKKLEKTNPEALKIKMWLF) the chain is on the cytoplasmic side. The helical transmembrane segment at 402–422 (PFLTYLTIIAICGILVSMAFI) threads the bilayer. Residues 423–425 (DSM) lie on the Extracellular side of the membrane. Residues 426–446 (RDELLLTGVITGIVLISYLVF) traverse the membrane as a helical segment. Over 447-469 (RKRKVSEKAAANPVTQQQPDILP) the chain is Cytoplasmic.

This sequence belongs to the amino acid-polyamine-organocation (APC) superfamily. Amino acid transporter (AAT) (TC 2.A.3.1) family.

The protein resides in the cell membrane. The enzyme catalyses 4-aminobutanoate(in) + H(+)(in) = 4-aminobutanoate(out) + H(+)(out). It catalyses the reaction beta-alanine(in) + H(+)(in) = beta-alanine(out) + H(+)(out). Its pathway is amino-acid degradation; 4-aminobutanoate degradation. Transporter for gamma-aminobutyrate (GABA). Can also transport beta-alanine. Can translocate several open-chain GABA analogs (3-aminobutyrate, 3-aminopropanoate, cis-4-aminobutenoate) across the membrane via counterflow against GABA, but cannot transport muscimol. Also functions as a low-affinity proline importer. The chain is Gamma-aminobutyric acid permease from Bacillus subtilis (strain 168).